The following is a 255-amino-acid chain: tRNA (guanine-N(7)-)-methyltransferase (255 aa).

The segment covering 1-11 (MSISDNSRDQL) has biased composition (basic and acidic residues). A disordered region spans residues 1–25 (MSISDNSRDQLGELPAGRPLQSDFD). S-adenosyl-L-methionine is bound by residues Glu-83, Glu-108, Asp-135, and Asp-158. Asp-158 is an active-site residue. Lys-162 contributes to the substrate binding site. The interval 164-169 (RHNKRR) is interaction with RNA. Substrate-binding positions include Asp-194 and 232–235 (TKFE).

Belongs to the class I-like SAM-binding methyltransferase superfamily. TrmB family.

The catalysed reaction is guanosine(46) in tRNA + S-adenosyl-L-methionine = N(7)-methylguanosine(46) in tRNA + S-adenosyl-L-homocysteine. Its pathway is tRNA modification; N(7)-methylguanine-tRNA biosynthesis. Catalyzes the formation of N(7)-methylguanine at position 46 (m7G46) in tRNA. The protein is tRNA (guanine-N(7)-)-methyltransferase of Corynebacterium glutamicum (strain ATCC 13032 / DSM 20300 / JCM 1318 / BCRC 11384 / CCUG 27702 / LMG 3730 / NBRC 12168 / NCIMB 10025 / NRRL B-2784 / 534).